Consider the following 261-residue polypeptide: Small ribosomal subunit protein uS2 (261 aa).

The disordered stretch occupies residues 222-261 (GKALREQDGEANEEQPISEEEKKEVLEEAMSEEDFEGDKE). Composition is skewed to acidic residues over residues 230–239 (GEANEEQPIS) and 248–261 (EEAMSEEDFEGDKE).

This sequence belongs to the universal ribosomal protein uS2 family.

This chain is Small ribosomal subunit protein uS2, found in Campylobacter lari (strain RM2100 / D67 / ATCC BAA-1060).